The sequence spans 453 residues: Bifunctional protein GlmU (453 aa).

Positions 1 to 227 (MTQDIVILAA…EAEVAGVNDR (227 aa)) are pyrophosphorylase. Residues 8–11 (LAAG), lysine 22, glutamine 73, 78–79 (GT), 100–102 (YGD), glycine 137, glutamate 152, asparagine 167, and asparagine 225 contribute to the UDP-N-acetyl-alpha-D-glucosamine site. Mg(2+) is bound at residue aspartate 102. Residue asparagine 225 coordinates Mg(2+). The tract at residues 228-248 (VQLAALERELQNQQAVSLMQN) is linker. The segment at 249–453 (GATLLDPSRI…KDNWPRPIKK (205 aa)) is N-acetyltransferase. Residues arginine 331 and lysine 349 each contribute to the UDP-N-acetyl-alpha-D-glucosamine site. Catalysis depends on histidine 361, which acts as the Proton acceptor. Tyrosine 364 and asparagine 375 together coordinate UDP-N-acetyl-alpha-D-glucosamine. Acetyl-CoA-binding positions include alanine 378, 384-385 (NY), serine 403, alanine 421, and arginine 438.

The protein in the N-terminal section; belongs to the N-acetylglucosamine-1-phosphate uridyltransferase family. In the C-terminal section; belongs to the transferase hexapeptide repeat family. As to quaternary structure, homotrimer. It depends on Mg(2+) as a cofactor.

The protein localises to the cytoplasm. It catalyses the reaction alpha-D-glucosamine 1-phosphate + acetyl-CoA = N-acetyl-alpha-D-glucosamine 1-phosphate + CoA + H(+). The enzyme catalyses N-acetyl-alpha-D-glucosamine 1-phosphate + UTP + H(+) = UDP-N-acetyl-alpha-D-glucosamine + diphosphate. The protein operates within nucleotide-sugar biosynthesis; UDP-N-acetyl-alpha-D-glucosamine biosynthesis; N-acetyl-alpha-D-glucosamine 1-phosphate from alpha-D-glucosamine 6-phosphate (route II): step 2/2. It functions in the pathway nucleotide-sugar biosynthesis; UDP-N-acetyl-alpha-D-glucosamine biosynthesis; UDP-N-acetyl-alpha-D-glucosamine from N-acetyl-alpha-D-glucosamine 1-phosphate: step 1/1. It participates in bacterial outer membrane biogenesis; LPS lipid A biosynthesis. Its function is as follows. Catalyzes the last two sequential reactions in the de novo biosynthetic pathway for UDP-N-acetylglucosamine (UDP-GlcNAc). The C-terminal domain catalyzes the transfer of acetyl group from acetyl coenzyme A to glucosamine-1-phosphate (GlcN-1-P) to produce N-acetylglucosamine-1-phosphate (GlcNAc-1-P), which is converted into UDP-GlcNAc by the transfer of uridine 5-monophosphate (from uridine 5-triphosphate), a reaction catalyzed by the N-terminal domain. The sequence is that of Bifunctional protein GlmU from Marinomonas sp. (strain MWYL1).